A 158-amino-acid polypeptide reads, in one-letter code: Fluoride-specific ion channel FluC 2 (158 aa).

A run of 4 helical transmembrane segments spans residues 25–45 (AWHG…IGGT), 63–83 (WTTF…MVVI), 95–115 (PFFG…AVDI), and 126–146 (TALA…RLAA). Na(+)-binding residues include Gly-103 and Thr-106.

Belongs to the fluoride channel Fluc/FEX (TC 1.A.43) family.

The protein resides in the cell membrane. It carries out the reaction fluoride(in) = fluoride(out). Na(+) is not transported, but it plays an essential structural role and its presence is essential for fluoride channel function. Its function is as follows. Fluoride-specific ion channel. Important for reducing fluoride concentration in the cell, thus reducing its toxicity. The protein is Fluoride-specific ion channel FluC 2 of Streptomyces avermitilis (strain ATCC 31267 / DSM 46492 / JCM 5070 / NBRC 14893 / NCIMB 12804 / NRRL 8165 / MA-4680).